We begin with the raw amino-acid sequence, 312 residues long: MESVELTLKNSNMKDKTLTGGAQNGDDFSVDDLLDFSKEEEDDDVLVEDEAELKVQRKRGVSDENTLHRSNDFSTADFHTSGLSVPMDDIAELEWLSNFVDDSSFTPYSAPTNKPVWLTGNRRHLVQPVKEETCFKSQHPAVKTRPKRARTGVRVWSHGSQSLTDSSSSSTTSSSSSPRPSSPLWLASGQFLDEPMTKTQKKKKVWKNAGQTQTQTQTQTRQCGHCGVQKTPQWRAGPLGAKTLCNACGVRYKSGRLLPEYRPACSPTFSSELHSNHHSKVIEMRRKKETSDGAEETGLNQPVQTVQVVSSF.

3 disordered regions span residues 1–33, 56–77, and 136–186; these read MESV…VDDL, QRKR…STAD, and KSQH…PLWL. Residues 56 to 71 are compositionally biased toward basic and acidic residues; that stretch reads QRKRGVSDENTLHRSN. Over residues 142-151 the composition is skewed to basic residues; the sequence is VKTRPKRART. The Nuclear localization signal motif lies at 143–150; sequence KTRPKRAR. A compositionally biased stretch (low complexity) spans 157-186; the sequence is SHGSQSLTDSSSSSTTSSSSSPRPSSPLWL. The GATA-type zinc-finger motif lies at 217-271; sequence QTQTRQCGHCGVQKTPQWRAGPLGAKTLCNACGVRYKSGRLLPEYRPACSPTFSS.

It belongs to the type IV zinc-finger family. Class A subfamily.

The protein localises to the nucleus. Transcriptional activator that specifically binds 5'-GATA-3' or 5'-GAT-3' motifs within gene promoters. May be involved in the regulation of some light-responsive genes. The protein is GATA transcription factor 6 (GATA6) of Arabidopsis thaliana (Mouse-ear cress).